A 217-amino-acid polypeptide reads, in one-letter code: Ribonuclease HII (217 aa).

The RNase H type-2 domain maps to Arg-27–Cys-216. A divalent metal cation contacts are provided by Asp-33, Glu-34, and Asp-125.

This sequence belongs to the RNase HII family. Requires Mn(2+) as cofactor. It depends on Mg(2+) as a cofactor.

The protein resides in the cytoplasm. It carries out the reaction Endonucleolytic cleavage to 5'-phosphomonoester.. Endonuclease that specifically degrades the RNA of RNA-DNA hybrids. In Geobacter sulfurreducens (strain ATCC 51573 / DSM 12127 / PCA), this protein is Ribonuclease HII.